A 255-amino-acid chain; its full sequence is Diphthine synthase (255 aa).

S-adenosyl-L-methionine contacts are provided by residues L9, D85, V88, 113–114, L164, A207, and H232; that span reads SI.

This sequence belongs to the diphthine synthase family. In terms of assembly, homodimer.

The enzyme catalyses 2-[(3S)-amino-3-carboxypropyl]-L-histidyl-[translation elongation factor 2] + 3 S-adenosyl-L-methionine = diphthine-[translation elongation factor 2] + 3 S-adenosyl-L-homocysteine + 3 H(+). The protein operates within protein modification; peptidyl-diphthamide biosynthesis. Functionally, S-adenosyl-L-methionine-dependent methyltransferase that catalyzes the trimethylation of the amino group of the modified target histidine residue in translation elongation factor 2 (EF-2), to form an intermediate called diphthine. The three successive methylation reactions represent the second step of diphthamide biosynthesis. The chain is Diphthine synthase from Methanococcus maripaludis (strain DSM 14266 / JCM 13030 / NBRC 101832 / S2 / LL).